Here is a 228-residue protein sequence, read N- to C-terminus: MITQKEKEHLAKDKQNIYLRIISGIALVSLFVIAILCLKTLFYILMILVGLGMLSEWYNMTYPSINYLLIGLIIIPIPISLLIFLSMEESNRLVIMLYFCILWSVDTFAMIGGKTFKGIKLAPKISPKKTWTGLITGTVSAGLVSVLVSLIPNYHIEHYYFSNKIYLFIISCILALIAQSSDLFISYFKRKFNIKDSGHIIPGHGGVLDRFDSIILTAPVFFCINIYL.

6 helical membrane passes run 31–51 (FVIAILCLKTLFYILMILVGL), 65–85 (INYLLIGLIIIPIPISLLIFL), 93–113 (LVIMLYFCILWSVDTFAMIGG), 131–151 (WTGLITGTVSAGLVSVLVSLI), 165–185 (IYLFIISCILALIAQSSDLFI), and 206–226 (GVLDRFDSIILTAPVFFCINI).

This sequence belongs to the CDS family.

Its subcellular location is the cell membrane. It carries out the reaction a 1,2-diacyl-sn-glycero-3-phosphate + CTP + H(+) = a CDP-1,2-diacyl-sn-glycerol + diphosphate. Its pathway is phospholipid metabolism; CDP-diacylglycerol biosynthesis; CDP-diacylglycerol from sn-glycerol 3-phosphate: step 3/3. This is Phosphatidate cytidylyltransferase (cdsA) from Rickettsia prowazekii (strain Madrid E).